The sequence spans 168 residues: MMFAYIVAVVSALALTSAFPTGAPRSACFDMIPGHFANPKLEPAPYTITTPISAVKGGNSVEVTISGKTPEDTMRGILLEARQGDNIVGTWTVPPGDDFSQPMNCGEPNNAVTHKRHSESADKQTVSYVWTAPSDLEGDVVFMVTIVKDYSNFWVRQTSAPVKILSHH.

The signal sequence occupies residues 1-18 (MMFAYIVAVVSALALTSA). The Reelin domain occupies 19–168 (FPTGAPRSAC…SAPVKILSHH (150 aa)). C28 and C105 are joined by a disulfide.

Belongs to the insect defense protein family. Very highly expressed in midgut, and highly expressed in fat body, silk gland and epidermis.

The protein resides in the secreted. Its function is as follows. As this protein is expressed upon bacterial infection, it may have antimicrobial activity. The chain is Putative defense protein 1 from Antheraea mylitta (Tasar silkworm).